A 718-amino-acid chain; its full sequence is Exostosin-2 (718 aa).

Topologically, residues 1–25 (MCASVKSNIRGPALIPRMKTKHRIY) are cytoplasmic. The chain crosses the membrane as a helical; Signal-anchor for type II membrane protein span at residues 26–46 (YVTLFSIVLLGLIATGMFQFW). Topologically, residues 47–718 (PHSIESSSDG…LKSFPNIGSL (672 aa)) are lumenal. Cystine bridges form between cysteine 85/cysteine 90, cysteine 96/cysteine 151, cysteine 286/cysteine 300, and cysteine 318/cysteine 339. Asparagine 288 carries N-linked (GlcNAc...) asparagine glycosylation. Leucine 461, arginine 465, asparagine 490, and asparagine 517 together coordinate UDP. Positions 465, 490, 517, 522, 538, 539, and 540 each coordinate UDP-N-acetyl-alpha-D-glucosamine. Positions 538 and 539 each coordinate UDP. Residue aspartate 540 coordinates Mn(2+). Residues tyrosine 582 and serine 584 each coordinate a protein. The cysteines at positions 626 and 676 are disulfide-linked. Residues glutamate 627 and aspartate 628 each contribute to the UDP-N-acetyl-alpha-D-glucosamine site. Asparagine 637 is a glycosylation site (N-linked (GlcNAc...) asparagine). A protein is bound by residues lysine 651 and lysine 653. Arginine 673 is a UDP-N-acetyl-alpha-D-glucosamine binding site.

Belongs to the glycosyltransferase 47 family. As to quaternary structure, part of the heparan sulfate polymerase, a dimeric complex composed of EXT1 and EXT2. Could also form homooligomeric complexes. Interacts with NDST1. Interacts with GALNT5. The cofactor is Mn(2+). In terms of processing, N-glycosylated at Asn-637. A soluble form is generated by proteolytic processing. As to expression, expressed in heart, brain, spleen, lung, liver, skeletal muscle and testis. Heart shows a high expression.

The protein localises to the golgi apparatus membrane. Its subcellular location is the golgi apparatus. The protein resides in the cis-Golgi network membrane. It is found in the endoplasmic reticulum membrane. It localises to the secreted. It catalyses the reaction 3-O-{[(1-&gt;4)-beta-D-GlcA-(1-&gt;4)-alpha-D-GlcNAc](n)-(1-&gt;4)-beta-D-GlcA-(1-&gt;3)-beta-D-Gal-(1-&gt;3)-beta-D-Gal-(1-&gt;4)-beta-D-Xyl}-L-seryl-[protein] + UDP-N-acetyl-alpha-D-glucosamine = 3-O-{alpha-D-GlcNAc-[(1-&gt;4)-beta-D-GlcA-(1-&gt;4)-alpha-D-GlcNAc](n)-(1-&gt;4)-beta-D-GlcA-(1-&gt;3)-beta-D-Gal-(1-&gt;3)-beta-D-Gal-(1-&gt;4)-beta-D-Xyl}-L-seryl-[protein] + UDP + H(+). It functions in the pathway protein modification; protein glycosylation. Functionally, glycosyltransferase forming with EXT1 the heterodimeric heparan sulfate polymerase which catalyzes the elongation of the heparan sulfate glycan backbone. Glycan backbone extension consists in the alternating transfer of (1-&gt;4)-beta-D-GlcA and (1-&gt;4)-alpha-D-GlcNAc residues from their respective UDP-sugar donors. Both EXT1 and EXT2 are required for the full activity of the polymerase since EXT1 bears the N-acetylglucosaminyl-proteoglycan 4-beta-glucuronosyltransferase activity within the complex while EXT2 carries the glucuronosyl-N-acetylglucosaminyl-proteoglycan 4-alpha-N-acetylglucosaminyltransferase activity. Heparan sulfate proteoglycans are ubiquitous components of the extracellular matrix and play an important role in tissue homeostasis and signaling. This is Exostosin-2 from Mus musculus (Mouse).